The chain runs to 583 residues: Laminarase-resistance protein LRE1 (583 aa).

Over residues 1 to 24 (MPNTHTQHVQISEPNPVNTLSTPS) the composition is skewed to polar residues. Disordered regions lie at residues 1 to 31 (MPNTHTQHVQISEPNPVNTLSTPSKRGHRHR) and 330 to 380 (LKDN…HMQH). Composition is skewed to basic and acidic residues over residues 332–342 (DNPRYAKDGYP) and 354–366 (LDSDKRQDFSGES). Phosphoserine is present on residues Ser-393 and Ser-398. The interval 457–486 (SCTPDGKEEMNRLKSNDSNEYSKSEGQIRT) is disordered. Basic and acidic residues predominate over residues 461–479 (DGKEEMNRLKSNDSNEYSK). A phosphoserine mark is found at Ser-516 and Ser-552.

In terms of processing, phosphorylated by CDC28/CDK1.

Its function is as follows. Overexpression affects chitinase expression, cell separation and budding pattern, and increases trehalose accumulation and heat resistance by inhibiting protein kinase CBK1. Overexpression also suppresses temperature-induced hyperosmosensitivity and sensitivity to cell wall degrading enzymes. Overexpression of both LRE1 and PBN1 confers resistance to laminarinase. The polypeptide is Laminarase-resistance protein LRE1 (LRE1) (Saccharomyces cerevisiae (strain ATCC 204508 / S288c) (Baker's yeast)).